A 520-amino-acid polypeptide reads, in one-letter code: Versicolorin B desaturase (520 aa).

A helical membrane pass occupies residues 22 to 42 (IFTTILSIFGIALSAVAAWGI). N-linked (GlcNAc...) asparagine glycosylation is found at Asn-266 and Asn-426. Heme is bound at residue Cys-462.

Belongs to the cytochrome P450 family. Requires heme as cofactor.

The protein resides in the membrane. It carries out the reaction versicolorin B + NADPH + O2 + H(+) = versicolorin A + NADP(+) + 2 H2O. It participates in mycotoxin biosynthesis. In terms of biological role, versicolorin B desaturase; part of the fragmented gene cluster that mediates the biosynthesis of dothistromin (DOTH), a polyketide toxin very similar in structure to the aflatoxin precursor, versicolorin B. The first step of the pathway is the conversion of acetate to norsolorinic acid (NOR) and requires the fatty acid synthase subunits hexA and hexB, as well as the polyketide synthase pksA. PksA combines a hexanoyl starter unit and 7 malonyl-CoA extender units to synthesize the precursor NOR. The hexanoyl starter unit is provided to the acyl-carrier protein (ACP) domain by the fungal fatty acid synthase hexA/hexB. The second step is the conversion of NOR to averantin (AVN) and requires the norsolorinic acid ketoreductase nor1, which catalyzes the dehydration of norsolorinic acid to form (1'S)-averantin. The cytochrome P450 monooxygenase avnA then catalyzes the hydroxylation of AVN to 5'hydroxyaverantin (HAVN). The next step is performed by adhA that transforms HAVN to averufin (AVF). Averufin might then be converted to hydroxyversicolorone by cypX and avfA. Hydroxyversicolorone is further converted versiconal hemiacetal acetate (VHA) by moxY. VHA is then the substrate for the versiconal hemiacetal acetate esterase est1 to yield versiconal (VAL). Versicolorin B synthase vbsA then converts VAL to versicolorin B (VERB) by closing the bisfuran ring. Then, the activity of the versicolorin B desaturase verB leads to versicolorin A (VERA). DotB, a predicted chloroperoxidase, may perform epoxidation of the A-ring of VERA. Alternatively, a cytochrome P450, such as cypX or avnA could catalyze this step. It is also possible that another, uncharacterized, cytochrome P450 enzyme is responsible for this step. Opening of the epoxide could potentially be achieved by the epoxide hydrolase epoA. However, epoA seems not to be required for DOTH biosynthesis, but other epoxide hydrolases may have the ability to complement this hydrolysis. Alternatively, opening of the epoxide ring could be achieved non-enzymatically. The next step is the deoxygenation of ring A to yield the 5,8-dihydroxyanthraquinone which is most likely catalyzed by the NADPH dehydrogenase encoded by ver1. The last stages of DOTH biosynthesis are proposed to involve hydroxylation of the bisfuran. OrdB and norB might have oxidative roles here. An alternative possibility is that cytochrome P450 monoogenases such as avnA and cypX might perform these steps in addition to previously proposed steps. In Dothistroma septosporum (strain NZE10 / CBS 128990) (Red band needle blight fungus), this protein is Versicolorin B desaturase.